The chain runs to 224 residues: Peroxiredoxin-6 (224 aa).

The Thioredoxin domain occupies 5-169 (LLLGDEAPNF…ILRVVDSLQL (165 aa)). The interval 31–40 (DSWGILFSHP) is required and sufficient for targeting to lysosomes and lamellar bodies. Residue Thr-44 is modified to Phosphothreonine. Residue Cys-47 is the Cysteine sulfenic acid (-SOH) intermediate; for peroxidase activity of the active site. Lys-63 carries the N6-acetyllysine modification. A Phosphotyrosine modification is found at Tyr-89. The For phospholipase activity role is filled by Asp-140. Thr-177 carries the post-translational modification Phosphothreonine; by MAPK. An N6-acetyllysine; alternate modification is found at Lys-209. The residue at position 209 (Lys-209) is an N6-succinyllysine; alternate.

This sequence belongs to the peroxiredoxin family. Prx6 subfamily. As to quaternary structure, homodimer. Interacts with GSTP1; mediates PRDX6 glutathionylation and regeneration. Interacts with APEX1. Interacts with STH. May interact with FAM168B. May interact with HTR2A. Post-translationally, phosphorylation at Thr-177 by MAP kinases increases the phospholipase activity of the enzyme. Phosphorylated form exhibits a greater lysophosphatidylcholine acyltransferase activity compared to the non-phosphorylated form. Irreversibly inactivated by overoxidation of Cys-47 to sulfinic acid (Cys-SO(2)H) and sulfonic acid (Cys-SO(3)H) forms upon oxidative stress.

It is found in the cytoplasm. The protein resides in the lysosome. It catalyses the reaction a hydroperoxide + 2 glutathione = an alcohol + glutathione disulfide + H2O. It carries out the reaction a 1,2-diacyl-sn-glycero-3-phosphocholine + H2O = a 1-acyl-sn-glycero-3-phosphocholine + a fatty acid + H(+). The enzyme catalyses a 1-acyl-sn-glycero-3-phosphocholine + an acyl-CoA = a 1,2-diacyl-sn-glycero-3-phosphocholine + CoA. The catalysed reaction is 1-hexadecanoyl-sn-glycero-3-phosphocholine + hexadecanoyl-CoA = 1,2-dihexadecanoyl-sn-glycero-3-phosphocholine + CoA. It catalyses the reaction 1,2-dihexadecanoyl-sn-glycero-3-phosphocholine + H2O = 1-hexadecanoyl-sn-glycero-3-phosphocholine + hexadecanoate + H(+). Functionally, thiol-specific peroxidase that catalyzes the reduction of hydrogen peroxide and organic hydroperoxides to water and alcohols, respectively. Can reduce H(2)O(2) and short chain organic, fatty acid, and phospholipid hydroperoxides. Also has phospholipase activity, can therefore either reduce the oxidized sn-2 fatty acyl group of phospholipids (peroxidase activity) or hydrolyze the sn-2 ester bond of phospholipids (phospholipase activity). These activities are dependent on binding to phospholipids at acidic pH and to oxidized phospholipds at cytosolic pH. Plays a role in cell protection against oxidative stress by detoxifying peroxides and in phospholipid homeostasis. Exhibits acyl-CoA-dependent lysophospholipid acyltransferase which mediates the conversion of lysophosphatidylcholine (1-acyl-sn-glycero-3-phosphocholine or LPC) into phosphatidylcholine (1,2-diacyl-sn-glycero-3-phosphocholine or PC). Shows a clear preference for LPC as the lysophospholipid and for palmitoyl CoA as the fatty acyl substrate. This is Peroxiredoxin-6 (Prdx6) from Rattus norvegicus (Rat).